The following is a 513-amino-acid chain: Bifunctional purine biosynthesis protein PurH (513 aa).

Residues 1–144 (MKRALVSVSD…KNYRDVTIVV (144 aa)) enclose the MGS-like domain.

This sequence belongs to the PurH family.

It catalyses the reaction (6R)-10-formyltetrahydrofolate + 5-amino-1-(5-phospho-beta-D-ribosyl)imidazole-4-carboxamide = 5-formamido-1-(5-phospho-D-ribosyl)imidazole-4-carboxamide + (6S)-5,6,7,8-tetrahydrofolate. The catalysed reaction is IMP + H2O = 5-formamido-1-(5-phospho-D-ribosyl)imidazole-4-carboxamide. Its pathway is purine metabolism; IMP biosynthesis via de novo pathway; 5-formamido-1-(5-phospho-D-ribosyl)imidazole-4-carboxamide from 5-amino-1-(5-phospho-D-ribosyl)imidazole-4-carboxamide (10-formyl THF route): step 1/1. It participates in purine metabolism; IMP biosynthesis via de novo pathway; IMP from 5-formamido-1-(5-phospho-D-ribosyl)imidazole-4-carboxamide: step 1/1. The polypeptide is Bifunctional purine biosynthesis protein PurH (Lactobacillus delbrueckii subsp. bulgaricus (strain ATCC BAA-365 / Lb-18)).